The following is a 949-amino-acid chain: ATPase 1, plasma membrane-type (949 aa).

Serine 2 carries the N-acetylserine modification. Topologically, residues 2–61 (SGLEDIKNETVDLEKIPIEEVFQQLKCTREGLTTQEGEDRIVIFGPNKLEEKKESKILKF) are cytoplasmic. Residues 62–81 (LGFMWNPLSWVMEAAALMAI) traverse the membrane as a helical segment. The Extracellular segment spans residues 82–93 (ALANGDNRPPDW). Residues 94–114 (QDFVGIICLLVINSTISFIEE) traverse the membrane as a helical segment. Topologically, residues 115-243 (NNAGNAAAAL…GHFQKVLTSI (129 aa)) are cytoplasmic. Residues 244 to 264 (GNFCICSIAIGIAIEIVVMYP) form a helical membrane-spanning segment. Over 265–273 (IQHRKYRDG) the chain is Extracellular. A helical membrane pass occupies residues 274 to 291 (IDNLLVLLIGGIPIAMPT). Residues 292–643 (VLSVTMAIGS…TSRAIFQRMK (352 aa)) are Cytoplasmic-facing. The 4-aspartylphosphate intermediate role is filled by aspartate 329. Mg(2+) is bound by residues aspartate 588 and aspartate 592. Residues 644-665 (NYTIYAVSITIRIVFGFMLIAL) traverse the membrane as a helical segment. At 666-670 (IWEFD) the chain is on the extracellular side. A helical transmembrane segment spans residues 671–693 (FSAFMVLIIAILNDGTIMTISKD). Residues 694 to 709 (RVKPSPTPDSWKLKEI) are Cytoplasmic-facing. Residues 710-730 (FATGIVLGGYQAIMSVIFFWA) form a helical membrane-spanning segment. Residues 731–751 (AHKTDFFSDKFGVRSIRDNND) are Extracellular-facing. Residues 752–772 (ELMGAVYLQVSIISQALIFVT) traverse the membrane as a helical segment. Topologically, residues 773–784 (RSRSWSFVERPG) are cytoplasmic. The helical transmembrane segment at 785-805 (ALLMIAFVIAQLVATLIAVYA) threads the bilayer. Residues 806–813 (DWTFAKVK) lie on the Extracellular side of the membrane. The helical transmembrane segment at 814–834 (GIGWGWAGVIWIYSIVTYFPQ) threads the bilayer. Residues 835–949 (DILKFAIRYI…IDTAGHHYTV (115 aa)) lie on the Cytoplasmic side of the membrane. At threonine 881 the chain carries Phosphothreonine. Phosphoserine occurs at positions 899 and 931. An interaction with 14-3-3 proteins region spans residues 947-949 (YTV). Threonine 948 carries the phosphothreonine modification.

Belongs to the cation transport ATPase (P-type) (TC 3.A.3) family. Type IIIA subfamily. As to quaternary structure, binds to 14-3-3 proteins. The binding is induced by phosphorylation of Thr-948. Binding to 14-3-3 proteins activates the H(+)-ATPase. Interacts with PPI1; this interaction promotes ATPase activity. Interacts with PSY1R. Part of a functional complex containing PSKR1, BAK1, CNGC17, and AHA. Interacts with CNGC17 and PSKR1. Triggered by SAUR9 via the phosphorylation of the C-terminal autoinhibitory domain. Interacts with AHA2. Binds to CBC1 and CBC2. In terms of processing, phosphorylated, probably by PHOT1 and PHOT2, at C-terminal Thr-948 in guard cells in response to blue light to induce stomatal opening. As to expression, expressed in guard cells, mesophyll cells, leaves and roots.

Its subcellular location is the cell membrane. The catalysed reaction is ATP + H2O + H(+)(in) = ADP + phosphate + 2 H(+)(out). Phosphorylation on Thr residues is repressed by tyrphostin 9, sphingosine, GW5074 and BML-265. By contrast, the fungal phytotoxin fusicoccin (FC) promotes phosphorylation of Thr-948 independently to BHP, thus leading to large stomatal opening. Its function is as follows. The plasma membrane H(+) ATPase of plants and fungi generates a proton gradient that drives the active transport of nutrients by H(+)-symport. The resulting external acidification and/or internal alkinization may mediate growth responses. Forms a functional cation-translocating unit with CNGC17 that is activated by PSKR1/BAK1 and possibly other BAK1/RLK complexes. Promotes stomatal opening in response to blue light. The protein is ATPase 1, plasma membrane-type of Arabidopsis thaliana (Mouse-ear cress).